Consider the following 225-residue polypeptide: Leucyl/phenylalanyl-tRNA--protein transferase (225 aa).

This sequence belongs to the L/F-transferase family.

The protein resides in the cytoplasm. It carries out the reaction N-terminal L-lysyl-[protein] + L-leucyl-tRNA(Leu) = N-terminal L-leucyl-L-lysyl-[protein] + tRNA(Leu) + H(+). The catalysed reaction is N-terminal L-arginyl-[protein] + L-leucyl-tRNA(Leu) = N-terminal L-leucyl-L-arginyl-[protein] + tRNA(Leu) + H(+). The enzyme catalyses L-phenylalanyl-tRNA(Phe) + an N-terminal L-alpha-aminoacyl-[protein] = an N-terminal L-phenylalanyl-L-alpha-aminoacyl-[protein] + tRNA(Phe). In terms of biological role, functions in the N-end rule pathway of protein degradation where it conjugates Leu, Phe and, less efficiently, Met from aminoacyl-tRNAs to the N-termini of proteins containing an N-terminal arginine or lysine. This chain is Leucyl/phenylalanyl-tRNA--protein transferase, found in Gluconobacter oxydans (strain 621H) (Gluconobacter suboxydans).